The chain runs to 822 residues: Cadherin-3 (822 aa).

The signal sequence occupies residues 1-25; the sequence is MELLSGPHAFLLLLLQVCWLRSVVS. A propeptide spanning residues 26–99 is cleaved from the precursor; that stretch reads EPYRAGFIGE…PTRILRRRKR (74 aa). Cadherin domains are found at residues 100 to 207, 208 to 320, 321 to 432, 433 to 538, and 539 to 645; these read EWVM…KPKF, TQDT…APEF, EPQK…APVF, VPPS…DHGP, and IPEP…RPWK. The Extracellular segment spans residues 100-647; the sequence is EWVMPPIFVP…NDCPRPWKGG (548 aa). Asparagine 192 is a glycosylation site (N-linked (GlcNAc...) asparagine). The N-linked (GlcNAc...) asparagine glycan is linked to asparagine 558. A helical transmembrane segment spans residues 648 to 670; that stretch reads FILPILGAVLALLTLLLALLLLV. The Cytoplasmic portion of the chain corresponds to 671–822; it reads RKKRKVKEPL…ADMYGGGEDD (152 aa).

Interacts with CDCP1 and CTNNB1.

Its subcellular location is the cell membrane. Functionally, cadherins are calcium-dependent cell adhesion proteins. They preferentially interact with themselves in a homophilic manner in connecting cells; cadherins may thus contribute to the sorting of heterogeneous cell types. This is Cadherin-3 (Cdh3) from Mus musculus (Mouse).